The following is an 815-amino-acid chain: (-)-kolavenyl diphosphate synthase TPS10, chloroplastic (815 aa).

The N-terminal 50 residues, 1-50, are a transit peptide targeting the chloroplast; that stretch reads MFMSSSSSSHARRPQLSSFSYLHPPLPFPGLSFSSTRDKRVNFDSTRIIS. Substrate is bound at residue lysine 247. Mg(2+)-binding residues include aspartate 379 and aspartate 381. Residues 379–382 carry the DXDD motif motif; it reads DIDD. Lysine 465 contributes to the substrate binding site.

Belongs to the terpene synthase family. Tpsc subfamily. Mg(2+) serves as cofactor.

The protein localises to the plastid. The protein resides in the chloroplast. It carries out the reaction (2E,6E,10E)-geranylgeranyl diphosphate = (-)-kolavenyl diphosphate. Its activity is regulated as follows. Inhibited by high concentrations of magnesium. Functionally, diterpene synthase that catalyzes the formation of (-)-kolavenyl diphosphate from geranylgeranyl diphosphate (GGPP). In Tripterygium wilfordii (Thunder God vine), this protein is (-)-kolavenyl diphosphate synthase TPS10, chloroplastic.